We begin with the raw amino-acid sequence, 479 residues long: Glycogen synthase (479 aa).

ADP-alpha-D-glucose is bound at residue lysine 15.

Belongs to the glycosyltransferase 1 family. Bacterial/plant glycogen synthase subfamily.

The catalysed reaction is [(1-&gt;4)-alpha-D-glucosyl](n) + ADP-alpha-D-glucose = [(1-&gt;4)-alpha-D-glucosyl](n+1) + ADP + H(+). It functions in the pathway glycan biosynthesis; glycogen biosynthesis. Functionally, synthesizes alpha-1,4-glucan chains using ADP-glucose. The protein is Glycogen synthase of Acidiphilium cryptum (strain JF-5).